The chain runs to 725 residues: Dynein axonemal assembly factor 1 (725 aa).

The segment at 1 to 91 (MHPEPSEPAT…EDRGPRMTKS (91 aa)) is disordered. Residues 38-48 (GCKEEINDPKE) are compositionally biased toward basic and acidic residues. Positions 53–67 (SSDTSYHSQQKQSGD) are enriched in polar residues. Basic and acidic residues predominate over residues 76 to 86 (HPREDREDRGP). LRR repeat units lie at residues 107–129 (ALNDTLYLHFKGFDRIENLEEYT), 130–151 (GLRCLWLQSNGIQKIENLEAQT), 152–173 (ELRCLFLQMNLLRKIENLEPLQ), 174–195 (KLDALNLSNNYIKTIENLSCLP), 196–217 (VLNTLQMAHNHLETVEDIQHLQ), and 221–242 (RLCVLDLSHNKLSDPEILSILE). The region spanning 256 to 294 (PVIRQIPNYRRTVTVRLKHLTYLDDRPVFPKDRACAEAW) is the LRRCT domain. Residues 330–345 (RAEERKRQRESQERGE) show a composition bias toward basic and acidic residues. The interval 330-513 (RAEERKRQRE…LGAAREEPTP (184 aa)) is disordered. At Ser-358 the chain carries Phosphoserine. 2 stretches are compositionally biased toward basic and acidic residues: residues 360–408 (EGKE…REDG) and 481–491 (VKGEDGDREPE). Thr-559 is modified (phosphothreonine). Residues Ser-562 and Ser-583 each carry the phosphoserine modification. Positions 632–642 (DLEIRKQDTKS) are enriched in basic and acidic residues. A disordered region spans residues 632 to 703 (DLEIRKQDTK…AATPPETCVG (72 aa)).

This sequence belongs to the DNAAF1 family. As to expression, mainly expressed in trachea and testis.

It is found in the cell projection. The protein localises to the cilium. The protein resides in the cytoplasm. Its subcellular location is the cytoskeleton. It localises to the spindle pole. In terms of biological role, cilium-specific protein required for the stability of the ciliary architecture. Plays a role in cytoplasmic preassembly of dynein arms. Involved in regulation of microtubule-based cilia and actin-based brush border microvilli. This chain is Dynein axonemal assembly factor 1 (DNAAF1), found in Homo sapiens (Human).